The following is a 181-amino-acid chain: Acetolactate synthase small subunit (181 aa).

The region spanning 4-78 (TLSVLVEDES…NVLKIQDITN (75 aa)) is the ACT domain.

It belongs to the acetolactate synthase small subunit family. Dimer of large and small chains.

It is found in the plastid. It localises to the chloroplast. It carries out the reaction 2 pyruvate + H(+) = (2S)-2-acetolactate + CO2. It participates in amino-acid biosynthesis; L-isoleucine biosynthesis; L-isoleucine from 2-oxobutanoate: step 1/4. Its pathway is amino-acid biosynthesis; L-valine biosynthesis; L-valine from pyruvate: step 1/4. The polypeptide is Acetolactate synthase small subunit (ilvH) (Galdieria sulphuraria (Red alga)).